The primary structure comprises 584 residues: DNA mismatch repair protein MutL (584 aa).

Belongs to the DNA mismatch repair MutL/HexB family.

In terms of biological role, this protein is involved in the repair of mismatches in DNA. It is required for dam-dependent methyl-directed DNA mismatch repair. May act as a 'molecular matchmaker', a protein that promotes the formation of a stable complex between two or more DNA-binding proteins in an ATP-dependent manner without itself being part of a final effector complex. The protein is DNA mismatch repair protein MutL of Syntrophomonas wolfei subsp. wolfei (strain DSM 2245B / Goettingen).